A 118-amino-acid polypeptide reads, in one-letter code: V-type proton ATPase subunit G 1 (118 aa).

Alanine 2 is subject to N-acetylalanine. A disordered region spans residues 19–42; it reads AEKVSEARKRKNRRLKQAKEEAQA.

It belongs to the V-ATPase G subunit family. As to quaternary structure, V-ATPase is a heteromultimeric enzyme made up of two complexes: the ATP-hydrolytic V1 complex and the proton translocation V0 complex. The V1 complex consists of three catalytic AB heterodimers that form a heterohexamer, three peripheral stalks each consisting of EG heterodimers, one central rotor including subunits D and F, and the regulatory subunits C and H. The proton translocation complex V0 consists of the proton transport subunit a, a ring of proteolipid subunits c9c'', rotary subunit d, subunits e and f, and the accessory subunits ATP6AP1/Ac45 and ATP6AP2/PRR. In terms of tissue distribution, brain, heart, kidney and spleen.

The protein resides in the apical cell membrane. In terms of biological role, subunit of the V1 complex of vacuolar(H+)-ATPase (V-ATPase), a multisubunit enzyme composed of a peripheral complex (V1) that hydrolyzes ATP and a membrane integral complex (V0) that translocates protons. V-ATPase is responsible for acidifying and maintaining the pH of intracellular compartments and in some cell types, is targeted to the plasma membrane, where it is responsible for acidifying the extracellular environment. In aerobic conditions, involved in intracellular iron homeostasis, thus triggering the activity of Fe(2+) prolyl hydroxylase (PHD) enzymes, and leading to HIF1A hydroxylation and subsequent proteasomal degradation. This Bos taurus (Bovine) protein is V-type proton ATPase subunit G 1 (ATP6V1G1).